A 353-amino-acid polypeptide reads, in one-letter code: Fasciclin-like arabinogalactan protein 21 (353 aa).

The signal sequence occupies residues 1–28; sequence MGCCSSDCFVYFILSIALAFMAISTTLR. Residues Asn-51, Asn-81, Asn-94, Asn-200, Asn-249, and Asn-315 are each glycosylated (N-linked (GlcNAc...) asparagine). Residues 83-181 form the FAS1 1 domain; that stretch reads TLFAIEDASF…HGVIGPFSPL (99 aa). An FAS1 2 domain is found at 254–352; sequence TILATPNLVS…GISHTLEIPH (99 aa).

Belongs to the fasciclin-like AGP family.

Its subcellular location is the secreted. May be a cell surface adhesion protein. The sequence is that of Fasciclin-like arabinogalactan protein 21 (FLA21) from Arabidopsis thaliana (Mouse-ear cress).